A 348-amino-acid chain; its full sequence is GTP 3',8-cyclase (348 aa).

Positions 24–242 constitute a Radical SAM core domain; that stretch reads PFGRAVTYLR…EKQFTLTDID (219 aa). Residue R33 coordinates GTP. Residues C40 and C44 each contribute to the [4Fe-4S] cluster site. Y46 serves as a coordination point for S-adenosyl-L-methionine. C47 contacts [4Fe-4S] cluster. Residue R82 coordinates GTP. Residue G86 participates in S-adenosyl-L-methionine binding. GTP is bound at residue T115. An S-adenosyl-L-methionine-binding site is contributed by S139. A GTP-binding site is contributed by K175. M209 provides a ligand contact to S-adenosyl-L-methionine. [4Fe-4S] cluster is bound by residues C272 and C275. 277–279 serves as a coordination point for GTP; the sequence is RVR. C289 lines the [4Fe-4S] cluster pocket.

The protein belongs to the radical SAM superfamily. MoaA family. As to quaternary structure, monomer and homodimer. [4Fe-4S] cluster is required as a cofactor.

The enzyme catalyses GTP + AH2 + S-adenosyl-L-methionine = (8S)-3',8-cyclo-7,8-dihydroguanosine 5'-triphosphate + 5'-deoxyadenosine + L-methionine + A + H(+). It participates in cofactor biosynthesis; molybdopterin biosynthesis. Catalyzes the cyclization of GTP to (8S)-3',8-cyclo-7,8-dihydroguanosine 5'-triphosphate. In Rhizobium etli (strain CIAT 652), this protein is GTP 3',8-cyclase.